We begin with the raw amino-acid sequence, 248 residues long: mRNA-decapping protein OPG122 (248 aa).

Positions 45 to 227 (HKRVSVSAIL…IAKYALDTAK (183 aa)) constitute a Nudix hydrolase domain. Positions 126-147 (GIPKRGENVPECLSREIKEEVN) match the Nudix box motif. Glu132 is a Mg(2+) binding site. Catalysis depends on Glu141, which acts as the Nucleophile. Glu145 contributes to the Mn(2+) binding site. Asp167 is a Mg(2+) binding site.

It belongs to the Nudix hydrolase family. Mg(2+) is required as a cofactor. Requires Mn(2+) as cofactor.

Its subcellular location is the host mitochondrion. Functionally, decapping enzyme that remove the protective 5'-cap from both host and viral mRNAs to commit transcripts for decay by the cellular exonuclease XRN1. Preferentially targets spliced mRNAs and since all viral genes are intronless, it preferentially targets host over viral transcripts. Acceleration of the turnover of cellular transcripts promotes the shutoff of host protein synthesis and therefore diminish the magnitude of antiviral response. In Bos taurus (Bovine), this protein is mRNA-decapping protein OPG122 (OPG122).